Consider the following 722-residue polypeptide: DUF724 domain-containing protein 7 (722 aa).

The segment at 424-449 (KTTPKKKLQAMKNQKSSTNDSVGEKV) is disordered. Over residues 434 to 444 (MKNQKSSTNDS) the composition is skewed to polar residues. The 181-residue stretch at 540 to 720 (VLPFVKKSQL…HEFQAILAAP (181 aa)) folds into the DUF724 domain. Residues 645–712 (CALEELKAVE…DQEVQNVDHE (68 aa)) are a coiled coil.

Homodimer. Interacts wtih ABAP1, ARIA and LHP1. Interacts with the non-modified histones H1, H2B, H3 and H4. As to expression, expressed in roots, leaves, stems and flowers.

It is found in the nucleus. Functionally, may act as a link between DNA replication, transcription and chromatin remodeling during flower development. May participate in the repression of LHP1-targeted genes during flower development by direct interaction with LHP1. May be involved in the polar growth of plant cells via transportation of RNAs. The protein is DUF724 domain-containing protein 7 of Arabidopsis thaliana (Mouse-ear cress).